The chain runs to 465 residues: MGCCYSLSSTVDPVQDHTTDASSEPRNGGGEDPPLTKFSFSALKTATNHFSPENIVSDQTSDVVFKGRLQNGGFVAIKRFNNMAWSDPKLFLEEAQRVGKLRHKRLVNLIGYCCDGDKRFLVADFMANDTLAKRLFQRKYQTMDWSIRLRVAYFVAEALDYCNTAGFASYNNLSAYKVLFDEDGDACLSCFGLMKEINNDQITTGSVNPENVIYRFGTVLVNLLSGKQIPPSHAPEMIHRKNVFKLMDPYLKGKFSIDEANVVYKLASQCLKYEGQESPNTKEIVATLETLQTRTEAPSYEVVEMTNQEKDASSSSNLSPLGEACLRMDLASIHSILVLAGYDDDKDIIELSFEEWIQEVKELQDVRRNGDRAFVEQDFKTAIACYSQFVEERSLVYPSVYARRSLSYLFCDEPEKALLDGMHAQGVFPDWPTAFYLQSVALAKLDMNTDSADTLKEAALLEVKK.

A compositionally biased stretch (polar residues) spans 1-12; sequence MGCCYSLSSTVD. Positions 1-34 are disordered; the sequence is MGCCYSLSSTVDPVQDHTTDASSEPRNGGGEDPP. The N-myristoyl glycine moiety is linked to residue Gly2. Residues Cys3 and Cys4 are each lipidated (S-palmitoyl cysteine). The 242-residue stretch at 50–291 folds into the Protein kinase domain; the sequence is FSPENIVSDQ…KEIVATLETL (242 aa). ATP contacts are provided by residues 56–64 and Lys78; that span reads VSDQTSDVV.

The protein belongs to the protein kinase superfamily. Ser/Thr protein kinase family. As to quaternary structure, interacts with YDA. Post-translationally, diacylation-mediated membrane association is essential for BSK12 function. Expressed at the mRNA level in the sperm cells in mature pollen, but the protein is only detectable in the zygote and the micropylar endosperm upon fertilization.

The protein resides in the cell membrane. Its function is as follows. Probable inactive protein kinase that activates the YODA MAP kinase cascade, which regulates the asymmetric first division and embryo polarity, by promoting the elongation of the zygote and the development of its basal daughter cell into the extra-embryonic suspensor. Acts as an adapter at the plasma membrane, possibly by recruiting and binding an activator. The chain is Probable inactive receptor-like kinase BSK12 from Arabidopsis thaliana (Mouse-ear cress).